We begin with the raw amino-acid sequence, 193 residues long: Peptidyl-tRNA hydrolase (193 aa).

Residue Y17 participates in tRNA binding. H22 acts as the Proton acceptor in catalysis. Residues Y69, N71, and N117 each contribute to the tRNA site.

Belongs to the PTH family. Monomer.

The protein localises to the cytoplasm. The enzyme catalyses an N-acyl-L-alpha-aminoacyl-tRNA + H2O = an N-acyl-L-amino acid + a tRNA + H(+). In terms of biological role, hydrolyzes ribosome-free peptidyl-tRNAs (with 1 or more amino acids incorporated), which drop off the ribosome during protein synthesis, or as a result of ribosome stalling. Its function is as follows. Catalyzes the release of premature peptidyl moieties from peptidyl-tRNA molecules trapped in stalled 50S ribosomal subunits, and thus maintains levels of free tRNAs and 50S ribosomes. The chain is Peptidyl-tRNA hydrolase from Leifsonia xyli subsp. xyli (strain CTCB07).